We begin with the raw amino-acid sequence, 202 residues long: Small ribosomal subunit protein uS4 (202 aa).

The S4 RNA-binding domain occupies 93–156 (RRLDNMVYRL…KDLKIISEAV (64 aa)).

Belongs to the universal ribosomal protein uS4 family. As to quaternary structure, part of the 30S ribosomal subunit. Contacts protein S5. The interaction surface between S4 and S5 is involved in control of translational fidelity.

Its function is as follows. One of the primary rRNA binding proteins, it binds directly to 16S rRNA where it nucleates assembly of the body of the 30S subunit. Functionally, with S5 and S12 plays an important role in translational accuracy. This Pediococcus pentosaceus (strain ATCC 25745 / CCUG 21536 / LMG 10740 / 183-1w) protein is Small ribosomal subunit protein uS4.